Consider the following 47-residue polypeptide: uncharacterized protein (47 aa).

This is an uncharacterized protein from Treponema pallidum (strain Nichols).